We begin with the raw amino-acid sequence, 218 residues long: UPF0598 protein C8orf82 homolog (218 aa).

Belongs to the UPF0598 family.

This chain is UPF0598 protein C8orf82 homolog, found in Rattus norvegicus (Rat).